The chain runs to 200 residues: ATP-dependent Clp protease proteolytic subunit (200 aa).

S102 acts as the Nucleophile in catalysis. H127 is an active-site residue.

Belongs to the peptidase S14 family. As to quaternary structure, fourteen ClpP subunits assemble into 2 heptameric rings which stack back to back to give a disk-like structure with a central cavity, resembling the structure of eukaryotic proteasomes.

It localises to the cytoplasm. It carries out the reaction Hydrolysis of proteins to small peptides in the presence of ATP and magnesium. alpha-casein is the usual test substrate. In the absence of ATP, only oligopeptides shorter than five residues are hydrolyzed (such as succinyl-Leu-Tyr-|-NHMec, and Leu-Tyr-Leu-|-Tyr-Trp, in which cleavage of the -Tyr-|-Leu- and -Tyr-|-Trp bonds also occurs).. Cleaves peptides in various proteins in a process that requires ATP hydrolysis. Has a chymotrypsin-like activity. Plays a major role in the degradation of misfolded proteins. This is ATP-dependent Clp protease proteolytic subunit from Dehalococcoides mccartyi (strain ATCC BAA-2100 / JCM 16839 / KCTC 5957 / BAV1).